We begin with the raw amino-acid sequence, 179 residues long: Transcription factor 21 (179 aa).

A disordered region spans residues 23-87 (IKLDPNKEFG…QVQRNAANAR (65 aa)). The segment covering 34–46 (SNDSNEESSTCDN) has biased composition (polar residues). Residues 50 to 64 (KKGRGTSGKRRKAPS) show a composition bias toward basic residues. The segment covering 70 to 80 (GNINQEGKQVQ) has biased composition (polar residues). The bHLH domain maps to 79–131 (VQRNAANARERARMRVLSKAFSRLKTTLPWVPPDTKLSKLDTLRLASSYIAHL).

In terms of assembly, efficient DNA binding requires dimerization with another bHLH protein.

It localises to the nucleus. Its function is as follows. Involved in epithelial-mesenchymal interactions in kidney and lung morphogenesis that include epithelial differentiation and branching morphogenesis. The sequence is that of Transcription factor 21 (tcf21) from Xenopus tropicalis (Western clawed frog).